The following is a 313-amino-acid chain: uncharacterized protein (313 aa).

The protein to M.jannaschii MJ0977 C-terminal region.

This is an uncharacterized protein from Methanocaldococcus jannaschii (strain ATCC 43067 / DSM 2661 / JAL-1 / JCM 10045 / NBRC 100440) (Methanococcus jannaschii).